Consider the following 102-residue polypeptide: ATP-dependent Clp protease adapter protein ClpS (102 aa).

Belongs to the ClpS family. As to quaternary structure, binds to the N-terminal domain of the chaperone ClpA.

In terms of biological role, involved in the modulation of the specificity of the ClpAP-mediated ATP-dependent protein degradation. This chain is ATP-dependent Clp protease adapter protein ClpS, found in Shewanella sp. (strain ANA-3).